A 202-amino-acid polypeptide reads, in one-letter code: MIAYVEGRLAEVAGNACVVVTDGGVGYEVFVPGHTLARLPDKGGRVSFFISTEVREDALELYGFATWDERQTFIVLTSISKVGAKTGLAILSQFRPDDLRRLVVEDDVLALTRVSGIGKKTAQHIFLELKYKLKVEDLPAAAPLVTGGAPGGVFRDALAGLANLGYGEEEASHVLKEVLHGEPDLDVGGALRAALRALARGR.

A domain I region spans residues 1–65 (MIAYVEGRLA…EDALELYGFA (65 aa)). The domain II stretch occupies residues 66–144 (TWDERQTFIV…VEDLPAAAPL (79 aa)). The segment at 145–155 (VTGGAPGGVFR) is flexible linker. Positions 155–202 (RDALAGLANLGYGEEEASHVLKEVLHGEPDLDVGGALRAALRALARGR) are domain III.

This sequence belongs to the RuvA family. Homotetramer. Forms an RuvA(8)-RuvB(12)-Holliday junction (HJ) complex. HJ DNA is sandwiched between 2 RuvA tetramers; dsDNA enters through RuvA and exits via RuvB. An RuvB hexamer assembles on each DNA strand where it exits the tetramer. Each RuvB hexamer is contacted by two RuvA subunits (via domain III) on 2 adjacent RuvB subunits; this complex drives branch migration. In the full resolvosome a probable DNA-RuvA(4)-RuvB(12)-RuvC(2) complex forms which resolves the HJ.

Its subcellular location is the cytoplasm. In terms of biological role, the RuvA-RuvB-RuvC complex processes Holliday junction (HJ) DNA during genetic recombination and DNA repair, while the RuvA-RuvB complex plays an important role in the rescue of blocked DNA replication forks via replication fork reversal (RFR). RuvA specifically binds to HJ cruciform DNA, conferring on it an open structure. The RuvB hexamer acts as an ATP-dependent pump, pulling dsDNA into and through the RuvAB complex. HJ branch migration allows RuvC to scan DNA until it finds its consensus sequence, where it cleaves and resolves the cruciform DNA. The protein is Holliday junction branch migration complex subunit RuvA of Nitratidesulfovibrio vulgaris (strain DP4) (Desulfovibrio vulgaris).